Here is a 514-residue protein sequence, read N- to C-terminus: Endoglucanase MaCel5A (514 aa).

The signal sequence occupies residues Met1–Ala23. Low complexity-rich tracts occupy residues Gly91–Gly114 and Ser179–Gly201. Disordered regions lie at residues Gly91 to Gly118 and Ser179 to Ser208. Glu346 (proton donor) is an active-site residue. The active-site Nucleophile is Glu439.

This sequence belongs to the glycosyl hydrolase 5 (cellulase A) family.

The enzyme catalyses Endohydrolysis of (1-&gt;4)-beta-D-glucosidic linkages in cellulose, lichenin and cereal beta-D-glucans.. Its activity is regulated as follows. Exhibits strong halostability and halotolerance. The activity increases about tenfold in the presence of 0.5 M NaCl, and about fivefold in the presence of 4.0 M NaCl. Tolerates detergents, but activity is decreased in the presence of EDTA. Activity is enhanced in the presence of Mn(2+), Ca(2+), Ba(2+) or Mg(2+), and decreased in the presence of Zn(2+), Cu(2+), Al(3+) or Fe(3+). Endoglucanase that exhibits highest activity toward barley beta-glucan, lower activity toward carboxymethyl cellulose (CMC-Na), and marginal activity toward laminarin and xylan. This Microbulbifer sp. (strain ALW1) protein is Endoglucanase MaCel5A.